The sequence spans 185 residues: Ribosome-recycling factor (185 aa).

This sequence belongs to the RRF family.

The protein localises to the cytoplasm. Responsible for the release of ribosomes from messenger RNA at the termination of protein biosynthesis. May increase the efficiency of translation by recycling ribosomes from one round of translation to another. This is Ribosome-recycling factor from Halorhodospira halophila (strain DSM 244 / SL1) (Ectothiorhodospira halophila (strain DSM 244 / SL1)).